A 701-amino-acid polypeptide reads, in one-letter code: Elongation factor G (701 aa).

The tr-type G domain occupies 11–287 (TKVRNIGIMA…AVIDYLPSPL (277 aa)). Residues 20 to 27 (AHIDAGKT), 84 to 88 (DTPGH), and 138 to 141 (NKMD) each bind GTP.

It belongs to the TRAFAC class translation factor GTPase superfamily. Classic translation factor GTPase family. EF-G/EF-2 subfamily.

The protein resides in the cytoplasm. In terms of biological role, catalyzes the GTP-dependent ribosomal translocation step during translation elongation. During this step, the ribosome changes from the pre-translocational (PRE) to the post-translocational (POST) state as the newly formed A-site-bound peptidyl-tRNA and P-site-bound deacylated tRNA move to the P and E sites, respectively. Catalyzes the coordinated movement of the two tRNA molecules, the mRNA and conformational changes in the ribosome. The protein is Elongation factor G of Mycobacterium leprae (strain Br4923).